The primary structure comprises 67 residues: Large ribosomal subunit protein uL29 (67 aa).

Belongs to the universal ribosomal protein uL29 family.

The sequence is that of Large ribosomal subunit protein uL29 from Solibacter usitatus (strain Ellin6076).